Here is a 382-residue protein sequence, read N- to C-terminus: Na(+)/H(+) antiporter NhaA (382 aa).

11 consecutive transmembrane segments (helical) span residues 13 to 33, 58 to 78, 94 to 114, 124 to 144, 153 to 173, 179 to 199, 204 to 224, 256 to 276, 285 to 305, 325 to 345, and 357 to 377; these read IGGI…NSPF, LLLW…GLEI, LVPA…FIFF, GWAI…SLLG, ILLT…IALF, SLLS…LNYF, ISVF…SGVH, VVFL…FVGL, VVLG…FLSL, VYGI…IGSL, and MVKI…FLVL.

The protein belongs to the NhaA Na(+)/H(+) (TC 2.A.33) antiporter family.

It localises to the cell inner membrane. It catalyses the reaction Na(+)(in) + 2 H(+)(out) = Na(+)(out) + 2 H(+)(in). Its function is as follows. Na(+)/H(+) antiporter that extrudes sodium in exchange for external protons. The chain is Na(+)/H(+) antiporter NhaA from Legionella pneumophila (strain Paris).